The chain runs to 496 residues: MFLKKLIEAKKAYTFDDVLLVPNASWVEPKDTDVSTDLAGLKLNIPIVSAAMDTVTEKEMAIALARLGGLGVIHRNMSIEEQVHQVQAVKKADEVVIKDVITVSPDDTVGEAINVMETYSISGLPVVDNEDKLVGIITHRDVKAIEDKTKKVKDVMTKDVVCAKEDVEEEEALELMYANRVERLPIVDDENRLIGIITLRDILKRRKYPQAARDKKGRLLVAAACGPHDFERAKALIEAEVDAIAIDCAHAHNMRVVENVKKFKEMLEGTDIKLIVGNIATKEAAEDLIKAGADVLKVGIGPGSICTTRVVAGVGVPQLTAVAEVADVAKEHNVPIIADGGIRYSGDIAKAIAAGADAVMLGSLLAGTDEAPGQLMVINGRKYKQYRGMGSLGAMTGGVGAGADRYFQAPAKSHMKHVKLVPEGVEGAVPYKGPVSEVVFQLIGGLRASMGYCGAKNLKEMQEKARFVIITPSGQVESHPHDIIITNEAPNYPLGK.

CBS domains lie at 96–152 and 156–212; these read VIKD…TKKV and MTKD…PQAA. Residues Asp247 and 299-301 contribute to the NAD(+) site; that span reads GIG. Residues Gly301 and Gly303 each coordinate K(+). Ser304 contributes to the IMP binding site. K(+) is bound at residue Cys306. The active-site Thioimidate intermediate is Cys306. IMP-binding positions include 339–341, 362–363, and 386–390; these read DGG, GS, and YRGMG. Arg405 functions as the Proton acceptor in the catalytic mechanism. Glu423 serves as a coordination point for IMP. Glu477, Ser478, and His479 together coordinate K(+).

The protein belongs to the IMPDH/GMPR family. As to quaternary structure, homotetramer. It depends on K(+) as a cofactor.

It catalyses the reaction IMP + NAD(+) + H2O = XMP + NADH + H(+). It participates in purine metabolism; XMP biosynthesis via de novo pathway; XMP from IMP: step 1/1. Mycophenolic acid (MPA) is a non-competitive inhibitor that prevents formation of the closed enzyme conformation by binding to the same site as the amobile flap. In contrast, mizoribine monophosphate (MZP) is a competitive inhibitor that induces the closed conformation. MPA is a potent inhibitor of mammalian IMPDHs but a poor inhibitor of the bacterial enzymes. MZP is a more potent inhibitor of bacterial IMPDH. Catalyzes the conversion of inosine 5'-phosphate (IMP) to xanthosine 5'-phosphate (XMP), the first committed and rate-limiting step in the de novo synthesis of guanine nucleotides, and therefore plays an important role in the regulation of cell growth. The sequence is that of Inosine-5'-monophosphate dehydrogenase from Methanocaldococcus jannaschii (strain ATCC 43067 / DSM 2661 / JAL-1 / JCM 10045 / NBRC 100440) (Methanococcus jannaschii).